The primary structure comprises 259 residues: NAD kinase (259 aa).

Asp49 serves as the catalytic Proton acceptor. NAD(+) is bound by residues 49-50 (DG), Arg54, 118-119 (NE), Asp148, Ala156, 159-164 (TAYNYS), and Ala183.

Belongs to the NAD kinase family. The cofactor is a divalent metal cation.

It is found in the cytoplasm. The catalysed reaction is NAD(+) + ATP = ADP + NADP(+) + H(+). Its function is as follows. Involved in the regulation of the intracellular balance of NAD and NADP, and is a key enzyme in the biosynthesis of NADP. Catalyzes specifically the phosphorylation on 2'-hydroxyl of the adenosine moiety of NAD to yield NADP. The sequence is that of NAD kinase from Xylella fastidiosa (strain Temecula1 / ATCC 700964).